Here is a 123-residue protein sequence, read N- to C-terminus: Anti-lipopolysaccharide factor (123 aa).

Residues 1–26 form the signal peptide; the sequence is MRKGVVAGLCLALVVMCLYLPQPCEA. N45 carries N-linked (GlcNAc...) asparagine glycosylation. A disulfide bridge connects residues C55 and C76.

In terms of tissue distribution, isoform 1 is highly expressed in muscle and stomach, moderately in heart and gill and at lower levels in hemocytes and hepatopancreas. Isoform 2 is mainly expressed in gill, hepatopancreas, muscle and eyestalk.

Its subcellular location is the secreted. Functionally, may bind to bacterial LPS and thus specifically inhibit the LPS-mediated activation of the hemolymph coagulation. It has a strong antibacterial effect especially on the growth of Gram-negative bacteria. This is Anti-lipopolysaccharide factor from Portunus trituberculatus (Swimming crab).